The sequence spans 472 residues: Protein translocase subunit SecD (472 aa).

6 consecutive transmembrane segments (helical) span residues 7 to 27 (LLLLIVVLVIGASFVLVKLPL), 298 to 318 (LVAGFVGLVLVLVFMAVYYRL), 326 to 345 (SLMIYAVLTLAAFALVGVTL), 349 to 368 (GIAGFILSIGMAVDANVLIF), 392 to 414 (AFSSILDSNVTTLIACAALFWFG), and 432 to 452 (SLFTALTCSRTLLLVIVLSLP).

It belongs to the SecD/SecF family. SecD subfamily. In terms of assembly, forms a complex with SecF. Part of the essential Sec protein translocation apparatus which comprises SecA, SecYEG and auxiliary proteins SecDF. Other proteins may also be involved.

It localises to the cell inner membrane. Part of the Sec protein translocase complex. Interacts with the SecYEG preprotein conducting channel. SecDF uses the proton motive force (PMF) to complete protein translocation after the ATP-dependent function of SecA. Its function is as follows. Probably participates in protein translocation into and across both the cytoplasmic and thylakoid membranes in cyanobacterial cells. This Synechocystis sp. (strain ATCC 27184 / PCC 6803 / Kazusa) protein is Protein translocase subunit SecD.